Consider the following 1086-residue polypeptide: Transcription initiation factor TFIID subunit 2 (1086 aa).

Positions 1–11 (MDFSEASTSGD) are enriched in polar residues. Disordered regions lie at residues 1–53 (MDFS…PPPV) and 1064–1086 (GYEA…NLMQ). Pro residues-rich tracts occupy residues 19 to 36 (PFPP…PPLA) and 44 to 53 (APPPLQPPPV). Over residues 1067-1078 (AARRSPPRRDFG) the composition is skewed to basic and acidic residues.

The protein belongs to the TAF2 family. In terms of assembly, component of the TFIID basal transcription factor complex, composed of TATA-box-binding protein tbp-1, and a number of TBP-associated factors (TAFs).

The protein localises to the nucleus. Functionally, the TFIID basal transcription factor complex plays a major role in the initiation of RNA polymerase II (Pol II)-dependent transcription. TFIID recognizes and binds promoters via its subunit tbp-1, a TATA-box-binding protein, and promotes assembly of the pre-initiation complex (PIC). The TFIID complex consists of tbp-1 and TBP-associated factors (TAFs), including taf-2. May regulate RNA polymerase II activity and thereby may control transcription initiation by RNA polymerase II. The protein is Transcription initiation factor TFIID subunit 2 of Caenorhabditis elegans.